Consider the following 123-residue polypeptide: Small ribosomal subunit protein uS12 (123 aa).

Asp-89 bears the 3-methylthioaspartic acid mark.

This sequence belongs to the universal ribosomal protein uS12 family. In terms of assembly, part of the 30S ribosomal subunit. Contacts proteins S8 and S17. May interact with IF1 in the 30S initiation complex.

Functionally, with S4 and S5 plays an important role in translational accuracy. In terms of biological role, interacts with and stabilizes bases of the 16S rRNA that are involved in tRNA selection in the A site and with the mRNA backbone. Located at the interface of the 30S and 50S subunits, it traverses the body of the 30S subunit contacting proteins on the other side and probably holding the rRNA structure together. The combined cluster of proteins S8, S12 and S17 appears to hold together the shoulder and platform of the 30S subunit. This chain is Small ribosomal subunit protein uS12, found in Caulobacter sp. (strain K31).